Consider the following 37-residue polypeptide: Large ribosomal subunit protein bL36 (37 aa).

It belongs to the bacterial ribosomal protein bL36 family.

This chain is Large ribosomal subunit protein bL36, found in Symbiobacterium thermophilum (strain DSM 24528 / JCM 14929 / IAM 14863 / T).